The following is a 230-amino-acid chain: Large ribosomal subunit protein uL1 (230 aa).

Belongs to the universal ribosomal protein uL1 family. Part of the 50S ribosomal subunit.

In terms of biological role, binds directly to 23S rRNA. The L1 stalk is quite mobile in the ribosome, and is involved in E site tRNA release. Its function is as follows. Protein L1 is also a translational repressor protein, it controls the translation of the L11 operon by binding to its mRNA. This chain is Large ribosomal subunit protein uL1, found in Oenococcus oeni (strain ATCC BAA-331 / PSU-1).